Consider the following 333-residue polypeptide: NADH-quinone oxidoreductase subunit H (333 aa).

The next 8 helical transmembrane spans lie at 8 to 28 (VLAA…YLVW), 75 to 95 (ILFM…FVTI), 108 to 128 (IGLL…LLAG), 154 to 174 (MLIT…IEIV), 191 to 211 (PGLF…CSLA), 251 to 271 (IVIG…CPFG), 273 to 293 (FPGV…FIWI), and 312 to 332 (ILIP…KVFA).

It belongs to the complex I subunit 1 family. In terms of assembly, NDH-1 is composed of 14 different subunits. Subunits NuoA, H, J, K, L, M, N constitute the membrane sector of the complex.

It is found in the cell inner membrane. It catalyses the reaction a quinone + NADH + 5 H(+)(in) = a quinol + NAD(+) + 4 H(+)(out). Its function is as follows. NDH-1 shuttles electrons from NADH, via FMN and iron-sulfur (Fe-S) centers, to quinones in the respiratory chain. The immediate electron acceptor for the enzyme in this species is believed to be ubiquinone. Couples the redox reaction to proton translocation (for every two electrons transferred, four hydrogen ions are translocated across the cytoplasmic membrane), and thus conserves the redox energy in a proton gradient. This subunit may bind ubiquinone. The protein is NADH-quinone oxidoreductase subunit H of Desulfotalea psychrophila (strain LSv54 / DSM 12343).